Reading from the N-terminus, the 73-residue chain is Conotoxin CnIIIE (73 aa).

Residues 1–19 form the signal peptide; sequence MSKLGVLLTICLLLFPLTA. Positions 20–49 are excised as a propeptide; it reads LPMDGDQSVDRPAERMQDDISSEQYPLFNQ. 3 cysteine pairs are disulfide-bonded: C53-C72, C54-C70, and C60-C73.

This sequence belongs to the conotoxin M superfamily. Expressed by the venom duct.

Its subcellular location is the secreted. Shows a paralytic effect in fish. This is Conotoxin CnIIIE from Conus consors (Singed cone).